The following is a 299-amino-acid chain: Mitochondrial 2-oxodicarboxylate carrier (299 aa).

Solcar repeat units lie at residues 11–100 (NEAS…YKKL), 107–196 (SPAL…VKNI), and 205–294 (LEFL…TYSW). 6 helical membrane-spanning segments follow: residues 17–37 (ILAGGSAGLVEICLMHPLDVV), 62–82 (MIFRTEGLFGFYKGILPPILA), 100–120 (LLGYVSLSPALTFAVAGLGSG), 179–199 (HGVFNMVYFGFYFNVKNIIPV), 211–231 (FGIGLLSGTIASVINIPFDVA), and 274–290 (IMRLGPGGAVMLLVYEY).

Belongs to the mitochondrial carrier (TC 2.A.29) family.

Its subcellular location is the mitochondrion inner membrane. The catalysed reaction is 2-oxoadipate(in) + 2-oxoglutarate(out) = 2-oxoadipate(out) + 2-oxoglutarate(in). The enzyme catalyses hexanedioate(in) + 2-oxoglutarate(out) = hexanedioate(out) + 2-oxoglutarate(in). It carries out the reaction L-2-aminoadipate(in) + 2-oxoglutarate(out) = L-2-aminoadipate(out) + 2-oxoglutarate(in). It catalyses the reaction glutarate(in) + 2-oxoglutarate(out) = glutarate(out) + 2-oxoglutarate(in). The catalysed reaction is 2-oxoheptanedioate(in) + 2-oxoglutarate(out) = 2-oxoheptanedioate(out) + 2-oxoglutarate(in). The enzyme catalyses heptanedioate(in) + 2-oxoglutarate(out) = heptanedioate(out) + 2-oxoglutarate(in). It carries out the reaction citrate(in) + 2-oxoglutarate(out) = citrate(out) + 2-oxoglutarate(in). Its function is as follows. Transports dicarboxylates across the inner membranes of mitochondria by a counter-exchange mechanism. Can transport 2-oxoadipate (2-oxohexanedioate), 2-oxoglutarate, adipate (hexanedioate), glutarate, and to a lesser extent, pimelate (heptanedioate), 2-oxopimelate (2-oxoheptanedioate), 2-aminoadipate (2-aminohexanedioate), oxaloacetate, and citrate. Plays a central role in catabolism of lysine, hydroxylysine, and tryptophan, by transporting common metabolite intermediates (such as 2-oxoadipate) into the mitochondria, where it is converted into acetyl-CoA and can enter the citric acid (TCA) cycle. In Bos taurus (Bovine), this protein is Mitochondrial 2-oxodicarboxylate carrier (SLC25A21).